Consider the following 270-residue polypeptide: Bis(5'-nucleosyl)-tetraphosphatase, symmetrical (270 aa).

This sequence belongs to the Ap4A hydrolase family.

It carries out the reaction P(1),P(4)-bis(5'-adenosyl) tetraphosphate + H2O = 2 ADP + 2 H(+). In terms of biological role, hydrolyzes diadenosine 5',5'''-P1,P4-tetraphosphate to yield ADP. This chain is Bis(5'-nucleosyl)-tetraphosphatase, symmetrical, found in Thioalkalivibrio sulfidiphilus (strain HL-EbGR7).